A 211-amino-acid chain; its full sequence is Thiamine-phosphate synthase (211 aa).

Residues 37–41 (QLRIK) and Asn-69 each bind 4-amino-2-methyl-5-(diphosphooxymethyl)pyrimidine. Mg(2+) contacts are provided by Asp-70 and Asp-89. Ser-108 provides a ligand contact to 4-amino-2-methyl-5-(diphosphooxymethyl)pyrimidine. 134–136 (TQT) provides a ligand contact to 2-[(2R,5Z)-2-carboxy-4-methylthiazol-5(2H)-ylidene]ethyl phosphate. 4-amino-2-methyl-5-(diphosphooxymethyl)pyrimidine is bound at residue Lys-137. Residues Gly-166 and 186–187 (VS) contribute to the 2-[(2R,5Z)-2-carboxy-4-methylthiazol-5(2H)-ylidene]ethyl phosphate site.

It belongs to the thiamine-phosphate synthase family. The cofactor is Mg(2+).

The catalysed reaction is 2-[(2R,5Z)-2-carboxy-4-methylthiazol-5(2H)-ylidene]ethyl phosphate + 4-amino-2-methyl-5-(diphosphooxymethyl)pyrimidine + 2 H(+) = thiamine phosphate + CO2 + diphosphate. It catalyses the reaction 2-(2-carboxy-4-methylthiazol-5-yl)ethyl phosphate + 4-amino-2-methyl-5-(diphosphooxymethyl)pyrimidine + 2 H(+) = thiamine phosphate + CO2 + diphosphate. The enzyme catalyses 4-methyl-5-(2-phosphooxyethyl)-thiazole + 4-amino-2-methyl-5-(diphosphooxymethyl)pyrimidine + H(+) = thiamine phosphate + diphosphate. It functions in the pathway cofactor biosynthesis; thiamine diphosphate biosynthesis; thiamine phosphate from 4-amino-2-methyl-5-diphosphomethylpyrimidine and 4-methyl-5-(2-phosphoethyl)-thiazole: step 1/1. Functionally, condenses 4-methyl-5-(beta-hydroxyethyl)thiazole monophosphate (THZ-P) and 2-methyl-4-amino-5-hydroxymethyl pyrimidine pyrophosphate (HMP-PP) to form thiamine monophosphate (TMP). The sequence is that of Thiamine-phosphate synthase from Shigella sonnei (strain Ss046).